The primary structure comprises 384 residues: Dual-specificity RNA methyltransferase RlmN (384 aa).

Glu105 functions as the Proton acceptor in the catalytic mechanism. Positions 111–350 (EDDRATLCVS…TIVRKTRGDD (240 aa)) constitute a Radical SAM core domain. The cysteines at positions 118 and 355 are disulfide-linked. [4Fe-4S] cluster contacts are provided by Cys125, Cys129, and Cys132. Residues 179–180 (GE), Ser211, 233–235 (SLH), and Asn312 each bind S-adenosyl-L-methionine. The S-methylcysteine intermediate role is filled by Cys355.

It belongs to the radical SAM superfamily. RlmN family. The cofactor is [4Fe-4S] cluster.

The protein localises to the cytoplasm. The catalysed reaction is adenosine(2503) in 23S rRNA + 2 reduced [2Fe-2S]-[ferredoxin] + 2 S-adenosyl-L-methionine = 2-methyladenosine(2503) in 23S rRNA + 5'-deoxyadenosine + L-methionine + 2 oxidized [2Fe-2S]-[ferredoxin] + S-adenosyl-L-homocysteine. It catalyses the reaction adenosine(37) in tRNA + 2 reduced [2Fe-2S]-[ferredoxin] + 2 S-adenosyl-L-methionine = 2-methyladenosine(37) in tRNA + 5'-deoxyadenosine + L-methionine + 2 oxidized [2Fe-2S]-[ferredoxin] + S-adenosyl-L-homocysteine. In terms of biological role, specifically methylates position 2 of adenine 2503 in 23S rRNA and position 2 of adenine 37 in tRNAs. m2A2503 modification seems to play a crucial role in the proofreading step occurring at the peptidyl transferase center and thus would serve to optimize ribosomal fidelity. The sequence is that of Dual-specificity RNA methyltransferase RlmN from Shigella flexneri serotype 5b (strain 8401).